The primary structure comprises 383 residues: Histidine decarboxylase (383 aa).

Residue H120 participates in substrate binding. At K233 the chain carries N6-(pyridoxal phosphate)lysine.

Belongs to the group II decarboxylase family. As to quaternary structure, homotetramer. The cofactor is pyridoxal 5'-phosphate.

It carries out the reaction L-histidine + H(+) = histamine + CO2. The polypeptide is Histidine decarboxylase (Acinetobacter baumannii (strain ACICU)).